Here is a 105-residue protein sequence, read N- to C-terminus: UPF0145 protein OEOE_0637 (105 aa).

Belongs to the UPF0145 family.

The sequence is that of UPF0145 protein OEOE_0637 from Oenococcus oeni (strain ATCC BAA-331 / PSU-1).